We begin with the raw amino-acid sequence, 347 residues long: Glycerol-3-phosphate dehydrogenase [NAD(P)+] (347 aa).

Positions 20, 39, and 118 each coordinate NADPH. K118, G152, and S154 together coordinate sn-glycerol 3-phosphate. A156 contacts NADPH. K207, D260, S270, R271, and N272 together coordinate sn-glycerol 3-phosphate. The active-site Proton acceptor is the K207. Residue R271 participates in NADPH binding. V295 and E297 together coordinate NADPH.

It belongs to the NAD-dependent glycerol-3-phosphate dehydrogenase family.

Its subcellular location is the cytoplasm. It catalyses the reaction sn-glycerol 3-phosphate + NAD(+) = dihydroxyacetone phosphate + NADH + H(+). The catalysed reaction is sn-glycerol 3-phosphate + NADP(+) = dihydroxyacetone phosphate + NADPH + H(+). It participates in membrane lipid metabolism; glycerophospholipid metabolism. Its function is as follows. Catalyzes the reduction of the glycolytic intermediate dihydroxyacetone phosphate (DHAP) to sn-glycerol 3-phosphate (G3P), the key precursor for phospholipid synthesis. The polypeptide is Glycerol-3-phosphate dehydrogenase [NAD(P)+] (Cupriavidus pinatubonensis (strain JMP 134 / LMG 1197) (Cupriavidus necator (strain JMP 134))).